The primary structure comprises 641 residues: Sodium-dependent nutrient amino acid transporter 1 (641 aa).

The disordered stretch occupies residues 1–38 (MELKGVQPSNGSSNGSGNGATNAASTEKTDAEKPTAER). At 1–40 (MELKGVQPSNGSSNGSGNGATNAASTEKTDAEKPTAERTN) the chain is on the cytoplasmic side. The span at 9–26 (SNGSSNGSGNGATNAAST) shows a compositional bias: low complexity. Positions 27–36 (EKTDAEKPTA) are enriched in basic and acidic residues. The next 3 helical transmembrane spans lie at 41–61 (WGNG…LGNV), 74–94 (GAFL…MYYL), and 111–131 (SVVP…ICII). N-linked (GlcNAc...) asparagine glycans are attached at residues asparagine 185 and asparagine 190. The next 9 helical transmembrane spans lie at 229-249 (PDWK…LVIM), 258-278 (AAYF…IRAV), 307-327 (AVVQ…MFAS), 341-361 (IVTT…FAIL), 401-421 (LFSV…IVAL), 447-467 (VCGF…ILTL), 474-494 (TYVV…VYGL), 516-536 (CWSF…MVTI), and 552-572 (IAGW…GLWY).

This sequence belongs to the sodium:neurotransmitter symporter (SNF) (TC 2.A.22) family. In terms of tissue distribution, in larvae, weak specific expression in the anterior midgut just proximal to the gastric caeca reproductive rudiments, common ureters of the Malpighian tubules, and distal swollen portion of the anterior pair of Malpighian tubules. Expression is also seen in the imaginal disks of the head; brain hemispheres and the ventral ganglion. Stronger expression in the posterior midgut.

The protein localises to the membrane. In terms of biological role, unusual broad substrate spectrum amino acid:sodium cotransporter that promotes absorption of the D isomers of essential amino acids. Neutral amino acids are the preferred substrates, especially methionine and phenylalanine. The protein is Sodium-dependent nutrient amino acid transporter 1 (NAAT1) of Drosophila melanogaster (Fruit fly).